A 968-amino-acid polypeptide reads, in one-letter code: MPFTLGQRWISDTESELGLGTVVAVDARTVTLLFPSTGENRLYARSDSPVTRVMFNPGDTITSHDGWQMQVEEVKEENGLLTYIGTRLDTEESGVALREVFLDSKLVFSKPQDRLFAGQIDRMDRFALRYRARKYSSEQFRMPYSGLRGQRTSLIPHQLNIAHDVGRRHAPRVLLADEVGLGKTIEAGMILHQQLLSGAAERVLIIVPETLQHQWLVEMLRRFNLRFALFDDERYAEAQHDAYNPFDTEQLVICSLDFARRSKQRLEHLCEAEWDLLVVDEAHHLVWSEDAPSREYQAIEQLAEHVPGVLLLTATPEQLGMESHFARLRLLDPNRFHDFAQFVEEQKNYRPVADAVAMLLAGNKLSNDELNMLGEMIGEQDIEPLLQAANSDSEDAQSARQELVSMLMDRHGTSRVLFRNTRNGVKGFPKRELHTIKLPLPTQYQTAIKVSGIMGARKSAEDRARDMLYPERIYQEFEGDNATWWNFDPRVEWLMGYLTSHRSQKVLVICAKAATALQLEQVLREREGIRAAVFHEGMSIIERDRAAAWFAEEDTGAQVLLCSEIGSEGRNFQFASHMVMFDLPFNPDLLEQRIGRLDRIGQAHDIQIHVPYLEKTAQSVLVRWYHEGLDAFEHTCPTGRTIYDSVYNDLINYLASPDQTEGFDDLIKNCREQHEALKAQLEQGRDRLLEIHSNGGEKAQALAESIEEQDDDTNLIAFAMNLFDIIGINQDDRGDNMIVLTPSDHMLVPDFPGLSEDGITITFDREVALAREDAQFITWEHPLIRNGLDLILSGDTGSSTISLLKNKALPVGTLLVELIYVVEAQAPKQLQLNRFLPPTPVRMLLDKNGNNLAAQVEFETFNRQLNAVNRHTGSKLVNAVQQDVHAILQLGEAQIEKSARALIDAARNEADEKLSAELSRLEALRAVNPNIRDDELTAIESNRQQVMESLDQAGWRLDALRLIVVTHQ.

Residues 164–334 (DVGRRHAPRV…FARLRLLDPN (171 aa)) form the Helicase ATP-binding domain. 177-184 (DEVGLGKT) provides a ligand contact to ATP. The short motif at 280-283 (DEAH) is the DEAH box element. The Helicase C-terminal domain occupies 490–662 (RVEWLMGYLT…YLASPDQTEG (173 aa)).

It belongs to the SNF2/RAD54 helicase family. RapA subfamily. Interacts with the RNAP. Has a higher affinity for the core RNAP than for the holoenzyme. Its ATPase activity is stimulated by binding to RNAP.

Its function is as follows. Transcription regulator that activates transcription by stimulating RNA polymerase (RNAP) recycling in case of stress conditions such as supercoiled DNA or high salt concentrations. Probably acts by releasing the RNAP, when it is trapped or immobilized on tightly supercoiled DNA. Does not activate transcription on linear DNA. Probably not involved in DNA repair. The polypeptide is RNA polymerase-associated protein RapA (Escherichia coli (strain 55989 / EAEC)).